Reading from the N-terminus, the 326-residue chain is MRDRLKDPVKIFEINKGKRPVHIAAPMVRYSKLPFRQLVRDYNTDIVYTPMILAKEFLHPKGRYFDFSTNDADASLILQFGVDDPVILEKAAQLVGPYVDGIGINCGCPQTWAIQEGIGSALLDEPEKVHKLVRAVKSTLGESFCTEVKIRIAKDLNKTRHLMQVIEKSGADIITVHGRTRQDRSSFPVNLDAIREVRPCVQIPVVANGDVKSLRKGLEIAKYTETQGIMSARGLLENPALFAGYEETPWGCVERFLWYSTSYSLNFHLFYHHLTTMMGQMTTKRERMTIPKDSFASVMDWLDEHFVVRRPDEPMFGESVLPCRRY.

Residues 26 to 28 (PMV) and Q79 each bind FMN. Catalysis depends on C108, which acts as the Proton donor. Residues K149, H177, 208 to 210 (NGD), and 232 to 233 (AR) contribute to the FMN site.

The protein belongs to the Dus family. Dus4 subfamily. The cofactor is FMN.

Its subcellular location is the mitochondrion. It catalyses the reaction 5,6-dihydrouridine(20a) in tRNA + NADP(+) = uridine(20a) in tRNA + NADPH + H(+). The catalysed reaction is 5,6-dihydrouridine(20a) in tRNA + NAD(+) = uridine(20a) in tRNA + NADH + H(+). It carries out the reaction 5,6-dihydrouridine(20b) in tRNA + NAD(+) = uridine(20b) in tRNA + NADH + H(+). The enzyme catalyses 5,6-dihydrouridine(20b) in tRNA + NADP(+) = uridine(20b) in tRNA + NADPH + H(+). It catalyses the reaction a 5,6-dihydrouridine in mRNA + NAD(+) = a uridine in mRNA + NADH + H(+). The catalysed reaction is a 5,6-dihydrouridine in mRNA + NADP(+) = a uridine in mRNA + NADPH + H(+). In terms of biological role, catalyzes the synthesis of dihydrouridine, a modified base found in the D-loop of most tRNAs. Also able to mediate dihydrouridylation of some mRNAs, thereby affecting their translation. In Schizosaccharomyces pombe (strain 972 / ATCC 24843) (Fission yeast), this protein is tRNA-dihydrouridine(20a/20b) synthase [NAD(P)+].